Consider the following 175-residue polypeptide: MAKALEQPFDVANIPGPKMATLLEKGKPVANMIKKAKRPLLIVGPDMTDEMFERVKKFVEKDITVVATGSAITRFIDAGLGEKVNYAVLHELTQFLLDPDWKGFDGQGNYDLVLMLGSIYYHGSQMLAAIKNFAPHIRALAIDRYYHPNADMSFGNLWKKEEDYLKLLDEILAEL.

It belongs to the CdhB family. In terms of assembly, heterotetramer of two alpha and two epsilon subunits. The ACDS complex is made up of alpha, epsilon, beta, gamma and delta subunits with a probable stoichiometry of (alpha(2)epsilon(2))(4)-beta(8)-(gamma(1)delta(1))(8).

Part of a complex that catalyzes the reversible cleavage of acetyl-CoA, allowing autotrophic growth from CO(2). The alpha-epsilon subcomponent functions as a carbon monoxide dehydrogenase. The precise role of the epsilon subunit is unclear; it may have a stabilizing role within the alpha(2)epsilon(2) component and/or be involved in electron transfer to FAD during a potential FAD-mediated CO oxidation. The protein is Acetyl-CoA decarbonylase/synthase complex subunit epsilon 2 (cdhB2) of Archaeoglobus fulgidus (strain ATCC 49558 / DSM 4304 / JCM 9628 / NBRC 100126 / VC-16).